We begin with the raw amino-acid sequence, 520 residues long: MKEQEIIAELSHSYFNHILREVRPFLEYFNDDFLDSSLTAPIDSELLERLFFMAAITSLDVSLPFNFSDSDVVKSHRKHRWLTSVQSFGSKSKQGIVGKSRLFNAFTVVVKRAKNSKFDEITMRDFCVGINLNKILRQAPFFVRTLGGFQHKNQFNIVTEFVDGRTLKTFLQSKRSSWMDFLNIFFQILLGLEIAQNRLNFSHYDLHTDNIILVPVERSFTVSLYGSNYTVKHDYRPVMIDFGLSSVHTKGKTLGQTNLENKGIFGHMSPGYDIYVFLLFCIDVVQSTNLSIYKGITDLLGFFNSKTNISMDLLTNNHIQSLEKGVSNLVPYQFISYIRDKFSPYLNVDIGPQKMSIDRCLGQKPMFLRLKHLLDRDDELEPLNSPLLKKGFVKTLVNNIKVYYWYREKMVLESDQTAQLIETDKEILDNLIDDLELKIVRKGSDKPQITVEQKNLFFMALEYYNFIRELRLEESSEFYKTWSKRFKKTWVCRNIFSQLDCVIREERLTKCPTAGATLEK.

Residues 82–393 (LTSVQSFGSK…NSPLLKKGFV (312 aa)) enclose the Protein kinase domain. ATP contacts are provided by residues 88 to 96 (FGSKSKQGI) and Lys-111. Asp-205 serves as the catalytic Proton acceptor. The stretch at 416–442 (QTAQLIETDKEILDNLIDDLELKIVRK) forms a coiled coil.

The protein belongs to the protein kinase superfamily.

Functionally, probable kinase. This is Probable kinase 098L from Aedes vexans (Inland floodwater mosquito).